Reading from the N-terminus, the 382-residue chain is F-box protein At3g27290 (382 aa).

The F-box domain maps to 16–105; sequence RKLELGLGEF…VDQMLFETLS (90 aa).

In Arabidopsis thaliana (Mouse-ear cress), this protein is F-box protein At3g27290.